Consider the following 663-residue polypeptide: Sodium/potassium/calcium exchanger 1 (663 aa).

Residues 32 to 128 lie on the Extracellular side of the membrane; sequence SPSAIPALLT…DLFSVEERRQ (97 aa). 3 N-linked (GlcNAc...) asparagine glycosylation sites follow: Asn59, Asn66, and Asn100. The chain crosses the membrane as a helical span at residues 129-149; sequence GWVVLHIFGMMYVFVALAIVC. Topologically, residues 150 to 173 are cytoplasmic; it reads DEYFVPALGVITEKLQISEDVAGA. An Alpha-1 repeat occupies 170-210; that stretch reads VAGATFMAAGGSAPELFTSLIGVFISHSNVGIGTIVGSAVF. A helical membrane pass occupies residues 174-194; that stretch reads TFMAAGGSAPELFTSLIGVFI. Residues 195–200 lie on the Extracellular side of the membrane; the sequence is SHSNVG. The chain crosses the membrane as a helical span at residues 201 to 221; sequence IGTIVGSAVFNILFVIGTCAL. Over 222 to 228 the chain is Cytoplasmic; that stretch reads FSREILH. The helical transmembrane segment at 229–253 threads the bilayer; sequence LTWWPLFRDISFYIVDLLMLILFFL. The Extracellular portion of the chain corresponds to 254-259; that stretch reads DSVIDW. The chain crosses the membrane as a helical span at residues 260 to 276; the sequence is WESLLLLTAYATYVFTM. The Cytoplasmic segment spans residues 277 to 471; the sequence is KHNVSLEQWV…SLEWPETRKK (195 aa). Disordered stretches follow at residues 308–343 and 384–465; these read KSSV…SLHN and LTGQ…SLEW. A compositionally biased stretch (basic and acidic residues) spans 316-325; that stretch reads DGTKPADGKK. Composition is skewed to polar residues over residues 327–343 and 399–412; these read QPTT…SLHN and ASQN…ASDS. Ser337 is subject to Phosphoserine. Over residues 413 to 423 the composition is skewed to basic and acidic residues; that stretch reads EPSKDKQKEDT. The span at 434-461 shows a compositional bias: acidic residues; it reads DNSEDSSSDSEDDSDDDSTDDEENDEPL. A helical membrane pass occupies residues 472 to 492; that stretch reads QAIYLFLFPIVFPLWSTIPDV. The Extracellular segment spans residues 493–499; the sequence is RNPDSKK. Residues 500-520 form a helical membrane-spanning segment; it reads FFVITFFGSIIWIAAFSYLMV. Residues 521–535 are Cytoplasmic-facing; sequence WWAHQVGETIGISEE. The chain crosses the membrane as a helical span at residues 536 to 556; the sequence is IMGLTILAAGTSIPDLITSVI. One copy of the Alpha-2 repeat lies at 543–574; sequence AAGTSIPDLITSVIVARKGLGDMAVSSSVGSN. Residues 557–574 are Extracellular-facing; it reads VARKGLGDMAVSSSVGSN. A helical transmembrane segment spans residues 575–595; the sequence is IFDITVGLPVPWFLYSVFNGF. Topologically, residues 596–604 are cytoplasmic; it reads SPVAVSSNG. A helical membrane pass occupies residues 605–625; the sequence is LFCAIVLLFLMLLFVIISIAL. Over 626-632 the chain is Extracellular; it reads CKWKMNK. Residues 633–653 traverse the membrane as a helical segment; that stretch reads ILGVTMFALYFVFLIISVMLE. The Cytoplasmic segment spans residues 654 to 663; it reads DRIISCPVSV.

Belongs to the Ca(2+):cation antiporter (CaCA) (TC 2.A.19) family. SLC24A subfamily. In terms of processing, the uncleaved signal sequence is required for efficient membrane targeting and proper membrane integration and topology. As to expression, retinal rods. Localizes to the inner segment of rod photoreceptors.

The protein localises to the cell membrane. The catalysed reaction is Ca(2+)(out) + K(+)(out) + 4 Na(+)(in) = Ca(2+)(in) + K(+)(in) + 4 Na(+)(out). In terms of biological role, calcium, potassium:sodium antiporter that transports 1 Ca(2+) and 1 K(+) in exchange for 4 Na(+). Critical component of the visual transduction cascade, controlling the calcium concentration of outer segments during light and darkness. Light causes a rapid lowering of cytosolic free calcium in the outer segment of both retinal rod and cone photoreceptors and the light-induced lowering of calcium is caused by extrusion via this protein which plays a key role in the process of light adaptation. This chain is Sodium/potassium/calcium exchanger 1 (SLC24A1), found in Gallus gallus (Chicken).